The chain runs to 365 residues: Aminomethyltransferase (365 aa).

The protein belongs to the GcvT family. In terms of assembly, the glycine cleavage system is composed of four proteins: P, T, L and H.

It catalyses the reaction N(6)-[(R)-S(8)-aminomethyldihydrolipoyl]-L-lysyl-[protein] + (6S)-5,6,7,8-tetrahydrofolate = N(6)-[(R)-dihydrolipoyl]-L-lysyl-[protein] + (6R)-5,10-methylene-5,6,7,8-tetrahydrofolate + NH4(+). Its function is as follows. The glycine cleavage system catalyzes the degradation of glycine. The sequence is that of Aminomethyltransferase from Aeromonas salmonicida (strain A449).